The chain runs to 189 residues: Parkinson disease protein 7 homolog (189 aa).

Alanine 2 bears the N-acetylalanine mark. Residues cysteine 46 and cysteine 53 are each lipidated (S-palmitoyl cysteine). A Phosphotyrosine modification is found at tyrosine 67. The active-site Nucleophile is the cysteine 106. Cysteine 106 carries the cysteine sulfinic acid (-SO2H); alternate modification. Cysteine 106 is lipidated: S-palmitoyl cysteine; alternate. The active site involves histidine 126. A Glycyl lysine isopeptide (Lys-Gly) (interchain with G-Cter in SUMO) cross-link involves residue lysine 130. Lysine 148 carries the post-translational modification N6-acetyllysine. The residue at position 182 (lysine 182) is an N6-succinyllysine.

It belongs to the peptidase C56 family. As to quaternary structure, homodimer. Binds EFCAB6/DJBP and PIAS2. Part of a ternary complex containing PARK7, EFCAB6/DJBP and AR. Binds to HIPK1. Interacts (via N-terminus) with OTUD7B. Interacts with BBS1, CLCF1 and MTERF. Interacts (via C-terminus) with NCF1; the interaction is enhanced by LPS and modulates NCF1 phosphorylation and membrane translocation. Interacts with NENF. Deglycase activity does not require glutathione as a cofactor, however, glycated glutathione constitutes a PARK7 substrate. is required as a cofactor. In terms of processing, sumoylated on Lys-130 by PIAS2 or PIAS4; which is essential for cell-growth promoting activity and transforming activity. Undergoes cleavage of a C-terminal peptide and subsequent activation of protease activity in response to oxidative stress. As to expression, expressed in erythroblasts and in mature red blood cells from peripheral blood (at protein level). In pancreas, expression is higher in islets than surrounding exocrine tissues.

The protein localises to the cell membrane. It is found in the cytoplasm. Its subcellular location is the membrane raft. The protein resides in the nucleus. It localises to the mitochondrion. The protein localises to the endoplasmic reticulum. The enzyme catalyses N(omega)-(1-hydroxy-2-oxopropyl)-L-arginyl-[protein] + H2O = lactate + L-arginyl-[protein] + H(+). It carries out the reaction N(6)-(1-hydroxy-2-oxopropyl)-L-lysyl-[protein] + H2O = lactate + L-lysyl-[protein] + H(+). It catalyses the reaction S-(1-hydroxy-2-oxopropyl)-L-cysteinyl-[protein] + H2O = lactate + L-cysteinyl-[protein] + H(+). The catalysed reaction is N(omega)-(1-hydroxy-2-oxoethyl)-L-arginyl-[protein] + H2O = L-arginyl-[protein] + glycolate + H(+). The enzyme catalyses N(6)-(1-hydroxy-2-oxoethyl)-L-lysyl-[protein] + H2O = glycolate + L-lysyl-[protein] + H(+). It carries out the reaction S-(1-hydroxy-2-oxoethyl)-L-cysteinyl-[protein] + H2O = glycolate + L-cysteinyl-[protein] + H(+). It catalyses the reaction N(2)-(1-hydroxy-2-oxopropyl)-dGTP + H2O = lactate + dGTP + H(+). The catalysed reaction is N(2)-(1-hydroxy-2-oxopropyl)-GTP + H2O = lactate + GTP + H(+). The enzyme catalyses N(2)-(1-hydroxy-2-oxopropyl)-GDP + H2O = lactate + GDP + H(+). It carries out the reaction N(2)-(1-hydroxy-2-oxopropyl)-GMP + H2O = lactate + GMP + H(+). It catalyses the reaction N(2)-(1-hydroxy-2-oxoethyl)-dGTP + H2O = dGTP + glycolate + H(+). The catalysed reaction is N(2)-(1-hydroxy-2-oxoethyl)-GTP + H2O = glycolate + GTP + H(+). The enzyme catalyses N(2)-(1-hydroxy-2-oxoethyl)-GDP + H2O = glycolate + GDP + H(+). It carries out the reaction N(2)-(1-hydroxy-2-oxoethyl)-GMP + H2O = glycolate + GMP + H(+). It catalyses the reaction an N(2)-(1-hydroxy-2-oxopropyl)-guanosine in RNA + H2O = a guanosine in RNA + lactate + H(+). The catalysed reaction is an N(2)-(1-hydroxy-2-oxopropyl)-2'-deoxyguanosine in DNA + H2O = a 2'-deoxyguanosine in DNA + lactate + H(+). The enzyme catalyses an N(2)-(1-hydroxy-2-oxoethyl)-guanosine in RNA + H2O = a guanosine in RNA + glycolate + H(+). It carries out the reaction an N(2)-(1-hydroxy-2-oxoethyl)-2'-deoxyguanosine in DNA + H2O = a 2'-deoxyguanosine in DNA + glycolate + H(+). Functionally, multifunctional protein with controversial molecular function which plays an important role in cell protection against oxidative stress and cell death acting as oxidative stress sensor and redox-sensitive chaperone and protease. It is involved in neuroprotective mechanisms like the stabilization of NFE2L2 and PINK1 proteins, male fertility as a positive regulator of androgen signaling pathway as well as cell growth and transformation through, for instance, the modulation of NF-kappa-B signaling pathway. Has been described as a protein and nucleotide deglycase that catalyzes the deglycation of the Maillard adducts formed between amino groups of proteins or nucleotides and reactive carbonyl groups of glyoxals. But this function is rebuted by other works. As a protein deglycase, repairs methylglyoxal- and glyoxal-glycated proteins, and releases repaired proteins and lactate or glycolate, respectively. Deglycates cysteine, arginine and lysine residues in proteins, and thus reactivates these proteins by reversing glycation by glyoxals. Acts on early glycation intermediates (hemithioacetals and aminocarbinols), preventing the formation of advanced glycation endproducts (AGE) that cause irreversible damage. Also functions as a nucleotide deglycase able to repair glycated guanine in the free nucleotide pool (GTP, GDP, GMP, dGTP) and in DNA and RNA. Is thus involved in a major nucleotide repair system named guanine glycation repair (GG repair), dedicated to reversing methylglyoxal and glyoxal damage via nucleotide sanitization and direct nucleic acid repair. Protects histones from adduction by methylglyoxal, controls the levels of methylglyoxal-derived argininine modifications on chromatin. Able to remove the glycations and restore histone 3, histone glycation disrupts both local and global chromatin architecture by altering histone-DNA interactions as well as histone acetylation and ubiquitination levels. Displays a very low glyoxalase activity that may reflect its deglycase activity. Eliminates hydrogen peroxide and protects cells against hydrogen peroxide-induced cell death. Required for correct mitochondrial morphology and function as well as for autophagy of dysfunctional mitochondria. Plays a role in regulating expression or stability of the mitochondrial uncoupling proteins SLC25A14 and SLC25A27 in dopaminergic neurons of the substantia nigra pars compacta and attenuates the oxidative stress induced by calcium entry into the neurons via L-type channels during pacemaking. Regulates astrocyte inflammatory responses, may modulate lipid rafts-dependent endocytosis in astrocytes and neuronal cells. In pancreatic islets, involved in the maintenance of mitochondrial reactive oxygen species (ROS) levels and glucose homeostasis in an age- and diet dependent manner. Protects pancreatic beta cells from cell death induced by inflammatory and cytotoxic setting. Binds to a number of mRNAs containing multiple copies of GG or CC motifs and partially inhibits their translation but dissociates following oxidative stress. Metal-binding protein able to bind copper as well as toxic mercury ions, enhances the cell protection mechanism against induced metal toxicity. In macrophages, interacts with the NADPH oxidase subunit NCF1 to direct NADPH oxidase-dependent ROS production, and protects against sepsis. The protein is Parkinson disease protein 7 homolog of Mus musculus (Mouse).